The sequence spans 33 residues: uncharacterized protein (33 aa).

Positions 1 to 33 (MQPGTGLSFDISQILKQGSDPKQKLPERQAIVL) are disordered.

This is an uncharacterized protein from Caenorhabditis elegans.